Here is a 416-residue protein sequence, read N- to C-terminus: Caspase-9 (416 aa).

In terms of domain architecture, CARD spans 1-92; that stretch reads MDEADRRLLR…DMLASFLRTN (92 aa). T125 is modified (phosphothreonine; by MAPK1). The residue at position 153 (Y153) is a Phosphotyrosine; by ABL1. Residues H237 and C287 contribute to the active site. The interval 294-320 is disordered; it reads HGFEVASTSPEDESPGSNPEPDATPFQ. Residues S302, S307, and S310 each carry the phosphoserine modification. The propeptide occupies 316-330; that stretch reads ATPFQEGLRTFDQLD. A (Microbial infection) ADP-riboxanated arginine modification is found at R355.

This sequence belongs to the peptidase C14A family. Heterotetramer that consists of two anti-parallel arranged heterodimers, each one formed by a 35 kDa (p35) and a 10 kDa (p10) subunit. Caspase-9 and APAF1 bind to each other via their respective NH2-terminal CED-3 homologous domains in the presence of cytochrome C and ATP. Interacts (inactive form) with EFHD2. Interacts with HAX1. Interacts with BIRC2/c-IAP1, XIAP/BIRC4, BIRC5/survivin, BIRC6/bruce and BIRC7/livin. Interacts with ABL1 (via SH3 domain); the interaction is direct and increases in the response of cells to genotoxic stress and ABL1/c-Abl activation. Interacts with BCL2L10. Interacts with NleF from pathogenic E.coli. In terms of processing, cleavages at Asp-315 by granzyme B and at Asp-330 by caspase-3 generate the two active subunits. Caspase-8 and -10 can also be involved in these processing events. Post-translationally, phosphorylated at Thr-125 by MAPK1/ERK2. Phosphorylation at Thr-125 is sufficient to block caspase-9 processing and subsequent caspase-3 activation. Phosphorylation on Tyr-153 by ABL1/c-Abl; occurs in the response of cells to DNA damage. (Microbial infection) ADP-riboxanation by C.violaceum CopC blocks CASP9 processing, preventing CASP9 activation and ability to mediate intrinsic apoptosis. In terms of processing, ubiquitinated by BIRC6; this activity is inhibited by DIABLO/SMAC. Ubiquitous, with highest expression in the heart, moderate expression in liver, skeletal muscle, and pancreas. Low levels in all other tissues. Within the heart, specifically expressed in myocytes.

It carries out the reaction Strict requirement for an Asp residue at position P1 and with a marked preference for His at position P2. It has a preferred cleavage sequence of Leu-Gly-His-Asp-|-Xaa.. With respect to regulation, inhibited by the effector protein NleF that is produced by pathogenic E.coli; this inhibits apoptosis. Inhibited by BIRC6; following inhibition of BIRC6-caspase binding by DIABLO/SMAC, BIRC6 is subjected to caspase cleavage, leading to an increase in active caspases. In terms of biological role, involved in the activation cascade of caspases responsible for apoptosis execution. Binding of caspase-9 to Apaf-1 leads to activation of the protease which then cleaves and activates effector caspases caspase-3 (CASP3) or caspase-7 (CASP7). Promotes DNA damage-induced apoptosis in a ABL1/c-Abl-dependent manner. Proteolytically cleaves poly(ADP-ribose) polymerase (PARP). Cleaves BIRC6 following inhibition of BIRC6-caspase binding by DIABLO/SMAC. Functionally, lacks activity is an dominant-negative inhibitor of caspase-9. This is Caspase-9 (CASP9) from Homo sapiens (Human).